The sequence spans 215 residues: uncharacterized protein (215 aa).

Residues M1 to G17 form the signal peptide. Residues G17–N110 form a disordered region. A lipid anchor (N-palmitoyl cysteine) is attached at C18. C18 carries the S-diacylglycerol cysteine lipid modification. Positions E25–K69 are enriched in basic and acidic residues. The span at E70–I95 shows a compositional bias: polar residues. The segment covering S96–N110 has biased composition (low complexity).

It localises to the cell membrane. This is an uncharacterized protein from Staphylococcus epidermidis (strain ATCC 12228 / FDA PCI 1200).